Here is a 253-residue protein sequence, read N- to C-terminus: Triosephosphate isomerase, cytosolic (253 aa).

The substrate site is built by asparagine 10 and lysine 12. Residue histidine 96 is the Electrophile of the active site. The active-site Proton acceptor is glutamate 166.

Belongs to the triosephosphate isomerase family. In terms of assembly, homodimer.

It is found in the cytoplasm. The enzyme catalyses D-glyceraldehyde 3-phosphate = dihydroxyacetone phosphate. It participates in carbohydrate biosynthesis; gluconeogenesis. The protein operates within carbohydrate degradation; glycolysis; D-glyceraldehyde 3-phosphate from glycerone phosphate: step 1/1. This chain is Triosephosphate isomerase, cytosolic, found in Zea mays (Maize).